Consider the following 154-residue polypeptide: Interleukin-2 (154 aa).

Residues 1-20 form the signal peptide; it reads MYKLQLLSCIALTLALVANS. An O-linked (GalNAc...) threonine glycan is attached at T23. An intrachain disulfide couples C78 to C126.

Belongs to the IL-2 family.

It localises to the secreted. Cytokine produced by activated CD4-positive helper T-cells and to a lesser extend activated CD8-positive T-cells and natural killer (NK) cells that plays pivotal roles in the immune response and tolerance. Binds to a receptor complex composed of either the high-affinity trimeric IL-2R (IL2RA/CD25, IL2RB/CD122 and IL2RG/CD132) or the low-affinity dimeric IL-2R (IL2RB and IL2RG). Interaction with the receptor leads to oligomerization and conformation changes in the IL-2R subunits resulting in downstream signaling starting with phosphorylation of JAK1 and JAK3. In turn, JAK1 and JAK3 phosphorylate the receptor to form a docking site leading to the phosphorylation of several substrates including STAT5. This process leads to activation of several pathways including STAT, phosphoinositide-3-kinase/PI3K and mitogen-activated protein kinase/MAPK pathways. Functions as a T-cell growth factor and can increase NK-cell cytolytic activity as well. Promotes strong proliferation of activated B-cells and subsequently immunoglobulin production. Plays a pivotal role in regulating the adaptive immune system by controlling the survival and proliferation of regulatory T-cells, which are required for the maintenance of immune tolerance. Moreover, participates in the differentiation and homeostasis of effector T-cell subsets, including Th1, Th2, Th17 as well as memory CD8-positive T-cells. In Lama glama (Llama), this protein is Interleukin-2 (IL2).